A 429-amino-acid chain; its full sequence is MANVTVIGSQWGDEGKGKIVDWLASRADAVVRFQGGHNAGHTLVVGEQVYKLSLLPSGIVTGTLSIIGNGVVLDPWALRDEITKLRGQGVEINADNFAIADNCALILPFHRDLDALRETAAGAGKIGTTGRGIGPAYEDKVGRRAIRVCDLAHLDHLEPQLDRLTAHHDALRAGFGEPPIDRDKLVADLREIADYVLEYAQPVWKRLKKVRKAGARILFEGAQGVLLDIDHGTYPFVTSSNTVSGTAASGSGLGPGAVGFVLGIAKAYTTRVGSGPFPTELEDETGQRLGERGHEFGTVTGRKRRCGWFDAVLVRQSCAVSGVTGIALTKLDVLDGFDTIRICTGYRLRGKILDYFPAHAADQAAVEPIYEEMDGWHESTAGARSYADLPAQAIKYIQRVQELIETPIALVSTSPEREDTILIRDPFSD.

GTP is bound by residues 12–18 and 40–42; these read GDEGKGK and GHT. The active-site Proton acceptor is the aspartate 13. Residues aspartate 13 and glycine 40 each contribute to the Mg(2+) site. Residues 13–16, 38–41, threonine 129, arginine 143, glutamine 223, threonine 238, and arginine 302 each bind IMP; these read DEGK and NAGH. Histidine 41 acts as the Proton donor in catalysis. 298-304 contacts substrate; that stretch reads TVTGRKR. GTP-binding positions include arginine 304, 330-332, and 412-414; these read KLD and STS.

This sequence belongs to the adenylosuccinate synthetase family. In terms of assembly, homodimer. Mg(2+) serves as cofactor.

Its subcellular location is the cytoplasm. It carries out the reaction IMP + L-aspartate + GTP = N(6)-(1,2-dicarboxyethyl)-AMP + GDP + phosphate + 2 H(+). It participates in purine metabolism; AMP biosynthesis via de novo pathway; AMP from IMP: step 1/2. Functionally, plays an important role in the de novo pathway of purine nucleotide biosynthesis. Catalyzes the first committed step in the biosynthesis of AMP from IMP. The sequence is that of Adenylosuccinate synthetase from Sphingopyxis alaskensis (strain DSM 13593 / LMG 18877 / RB2256) (Sphingomonas alaskensis).